The following is a 515-amino-acid chain: Pisatin demethylase (515 aa).

Residue Cys453 participates in heme binding.

The protein belongs to the cytochrome P450 family. Requires heme as cofactor.

Its function is as follows. Can detoxify the phytoalexin pisatin from garden pea. Pisatin is an antimicrobial compound produced by pea in response to infection by plant pathogens. The chain is Pisatin demethylase (PDAT9) from Fusarium vanettenii (Neocosmospora pisi).